A 1064-amino-acid polypeptide reads, in one-letter code: Lysine-specific demethylase 4A (1064 aa).

The residue at position 2 (A2) is an N-acetylalanine. The JmjN domain maps to 14 to 56 (IMTFYPTMEEFRNFSRYIAYIESQGAHRAGLAKVVPPKEWKPR). Y132 contacts 2-oxoglutarate. The JmjC domain maps to 142-308 (EKHVDEWNIG…YGKQAVLCSC (167 aa)). The Fe cation site is built by H188 and E190. N198 and K206 together coordinate 2-oxoglutarate. Zn(2+) is bound by residues C234 and H240. K241 contacts 2-oxoglutarate. Fe cation is bound at residue H276. Zn(2+)-binding residues include C306 and C308. The interval 358-384 (ELPPRAGNEEECPEEDMEGVEDGEEGD) is disordered. A compositionally biased stretch (acidic residues) spans 366 to 382 (EEECPEEDMEGVEDGEE). K471 is covalently cross-linked ((Microbial infection) Glycyl lysine isopeptide (Lys-Gly) (interchain with G-Cter in SUMO)). Disordered stretches follow at residues 501-537 (FSGSKKKSSSSLGSGSSRDSISSDSETSEPLSCRAQG) and 616-641 (SDDETSEQLTPEEEAEETEAWAKPLS). The span at 509–532 (SSSLGSGSSRDSISSDSETSEPLS) shows a compositional bias: low complexity. At S523 the chain carries Phosphoserine. The segment at 597–638 (RQPLSKLPRHHPLVLQECVSDDETSEQLTPEEEAEETEAWAK) is interaction with NCOR1. The span at 616-634 (SDDETSEQLTPEEEAEETE) shows a compositional bias: acidic residues. The segment at 709 to 767 (MCFTSTGCSTDINLSTPYLEEDGTSILVSCKKCSVRVHASCYGVPPAKASEDWMCSRCS) adopts a PHD-type 1 zinc-finger fold. Residues 772–805 (EEDCCLCSLRGGALQRANDDRWVHVSCAVAILEA) form a C2HC pre-PHD-type zinc finger. Residues 828 to 885 (LKCIFCKKRRKRTAGCCVQCSHGRCPTAFHVSCAQAAGVMMQPDDWPFVVFITCFRHK) form a PHD-type 2 zinc finger. Tudor domains lie at 897-954 (QSIT…CLQF) and 955-1011 (GPPA…EELP).

Belongs to the JHDM3 histone demethylase family. In terms of assembly, interacts with histone deacetylase proteins HDAC1, HDAC2 and HDAC3. Interacts with RB and NCOR1. Interacts with VRK1. Interacts with FBXO22; this interaction promotes KDM4A ubiquitination. As to quaternary structure, (Microbial infection) Interacts with HTLV-1 Tax protein. It depends on Fe(2+) as a cofactor. Post-translationally, (Microbial infection) SUMOylated by human herpesvirus 8 E3 SUMO-protein ligase K-bZIP/K8 at Lys-471; thereby modulating the chromatin binding and histone demethylase activity of KDM4A. Ubiquitinated by RNF8 and RNF168 following DNA damage, leading to its degradation. Degradation promotes accessibility of H4K20me2 mark for DNA repair protein TP53BP1, which is then recruited. Also ubiquitinated by the SCF(FBXO22) complex; leading to proteasomal degradation. Ubiquitous.

Its subcellular location is the nucleus. The enzyme catalyses N(6),N(6),N(6)-trimethyl-L-lysyl(9)-[histone H3] + 2 2-oxoglutarate + 2 O2 = N(6)-methyl-L-lysyl(9)-[histone H3] + 2 formaldehyde + 2 succinate + 2 CO2. The catalysed reaction is N(6),N(6),N(6)-trimethyl-L-lysyl(36)-[histone H3] + 2 2-oxoglutarate + 2 O2 = N(6)-methyl-L-lysyl(36)-[histone H3] + 2 formaldehyde + 2 succinate + 2 CO2. With respect to regulation, several specific inhibitors are being developed and tested. In terms of biological role, histone demethylase that specifically demethylates 'Lys-9' and 'Lys-36' residues of histone H3, thereby playing a central role in histone code. Does not demethylate histone H3 'Lys-4', H3 'Lys-27' nor H4 'Lys-20'. Demethylates trimethylated H3 'Lys-9' and H3 'Lys-36' residue, while it has no activity on mono- and dimethylated residues. Demethylation of Lys residue generates formaldehyde and succinate. Participates in transcriptional repression of ASCL2 and E2F-responsive promoters via the recruitment of histone deacetylases and NCOR1, respectively. Its function is as follows. Crucial for muscle differentiation, promotes transcriptional activation of the Myog gene by directing the removal of repressive chromatin marks at its promoter. Lacks the N-terminal demethylase domain. This chain is Lysine-specific demethylase 4A (KDM4A), found in Homo sapiens (Human).